The following is a 495-amino-acid chain: Anaerobic nitric oxide reductase flavorubredoxin (495 aa).

Residues 30–210 (HKGTSYNSYL…PFSPLVTAKI (181 aa)) are zinc metallo-hydrolase. Fe cation contacts are provided by histidine 79, glutamate 81, aspartate 83, histidine 147, aspartate 166, and histidine 227. The Flavodoxin-like domain occupies 254–393 (ITLFYDSMSN…ECREHGRQLA (140 aa)). Residues 260 to 264 (SMSNN) and 342 to 369 (AFGSYGWTGGAVDRIQTRLMDAGFDISI) contribute to the FMN site. Positions 438–489 (DQAMLCTVCQWVYDPAQGEPDQLVAPGTPWAQVPDSFLCPGCGIGKEVFEPC) constitute a Rubredoxin-like domain. Fe cation contacts are provided by cysteine 443, cysteine 446, cysteine 476, and cysteine 479.

In the N-terminal section; belongs to the zinc metallo-hydrolase group 3 family. As to quaternary structure, homotetramer. Requires Fe cation as cofactor. The cofactor is FMN.

It localises to the cytoplasm. It functions in the pathway nitrogen metabolism; nitric oxide reduction. Anaerobic nitric oxide reductase; uses NADH to detoxify nitric oxide (NO), protecting several 4Fe-4S NO-sensitive enzymes. Has at least 2 reductase partners, only one of which (NorW, flavorubredoxin reductase) has been identified. NO probably binds to the di-iron center; electrons enter from the NorW at rubredoxin and are transferred sequentially to the FMN center and the di-iron center. Also able to function as an aerobic oxygen reductase. This is Anaerobic nitric oxide reductase flavorubredoxin from Aeromonas hydrophila subsp. hydrophila (strain ATCC 7966 / DSM 30187 / BCRC 13018 / CCUG 14551 / JCM 1027 / KCTC 2358 / NCIMB 9240 / NCTC 8049).